The chain runs to 393 residues: 5-amino-6-(D-ribitylamino)uracil--L-tyrosine 4-hydroxyphenyl transferase (393 aa).

A Radical SAM core domain is found at 71 to 318 (VTYVINRNIN…TAVSRIFLGN (248 aa)). [4Fe-4S] cluster is bound by residues Cys85, Cys89, and Cys92.

It belongs to the radical SAM superfamily. CofH family. In terms of assembly, consists of two subunits, CofG and CofH. The cofactor is [4Fe-4S] cluster.

The enzyme catalyses 5-amino-6-(D-ribitylamino)uracil + L-tyrosine + S-adenosyl-L-methionine = 5-amino-5-(4-hydroxybenzyl)-6-(D-ribitylimino)-5,6-dihydrouracil + 2-iminoacetate + 5'-deoxyadenosine + L-methionine + H(+). The protein operates within cofactor biosynthesis; coenzyme F0 biosynthesis. Its function is as follows. Catalyzes the radical-mediated synthesis of 5-amino-5-(4-hydroxybenzyl)-6-(D-ribitylimino)-5,6-dihydrouracil from 5-amino-6-(D-ribitylamino)uracil and L-tyrosine. The sequence is that of 5-amino-6-(D-ribitylamino)uracil--L-tyrosine 4-hydroxyphenyl transferase from Trichodesmium erythraeum (strain IMS101).